Consider the following 334-residue polypeptide: Holliday junction branch migration complex subunit RuvB (334 aa).

Residues 4–184 (ADRLIQPQIQ…FGIPLRLEFY (181 aa)) are large ATPase domain (RuvB-L). Residues Arg24, Gly65, Lys68, Thr69, Thr70, 131–133 (EDY), Arg174, Tyr184, and Arg221 each bind ATP. Mg(2+) is bound at residue Thr69. The small ATPAse domain (RuvB-S) stretch occupies residues 185–255 (NIKDLSTIVT…VAEHALDLLD (71 aa)). Residues 258-334 (SEGFDYMDRK…YQHFELIKPE (77 aa)) are head domain (RuvB-H). DNA-binding residues include Arg294, Arg313, and Arg318.

Belongs to the RuvB family. In terms of assembly, homohexamer. Forms an RuvA(8)-RuvB(12)-Holliday junction (HJ) complex. HJ DNA is sandwiched between 2 RuvA tetramers; dsDNA enters through RuvA and exits via RuvB. An RuvB hexamer assembles on each DNA strand where it exits the tetramer. Each RuvB hexamer is contacted by two RuvA subunits (via domain III) on 2 adjacent RuvB subunits; this complex drives branch migration. In the full resolvosome a probable DNA-RuvA(4)-RuvB(12)-RuvC(2) complex forms which resolves the HJ.

The protein localises to the cytoplasm. The enzyme catalyses ATP + H2O = ADP + phosphate + H(+). In terms of biological role, the RuvA-RuvB-RuvC complex processes Holliday junction (HJ) DNA during genetic recombination and DNA repair, while the RuvA-RuvB complex plays an important role in the rescue of blocked DNA replication forks via replication fork reversal (RFR). RuvA specifically binds to HJ cruciform DNA, conferring on it an open structure. The RuvB hexamer acts as an ATP-dependent pump, pulling dsDNA into and through the RuvAB complex. RuvB forms 2 homohexamers on either side of HJ DNA bound by 1 or 2 RuvA tetramers; 4 subunits per hexamer contact DNA at a time. Coordinated motions by a converter formed by DNA-disengaged RuvB subunits stimulates ATP hydrolysis and nucleotide exchange. Immobilization of the converter enables RuvB to convert the ATP-contained energy into a lever motion, pulling 2 nucleotides of DNA out of the RuvA tetramer per ATP hydrolyzed, thus driving DNA branch migration. The RuvB motors rotate together with the DNA substrate, which together with the progressing nucleotide cycle form the mechanistic basis for DNA recombination by continuous HJ branch migration. Branch migration allows RuvC to scan DNA until it finds its consensus sequence, where it cleaves and resolves cruciform DNA. This is Holliday junction branch migration complex subunit RuvB from Shewanella baltica (strain OS155 / ATCC BAA-1091).